We begin with the raw amino-acid sequence, 489 residues long: Pluviatolide synthase (489 aa).

The helical transmembrane segment at 6–26 threads the bilayer; the sequence is SVLAMSSTLILALAMALIFLF. Heme is bound at residue Cys-432.

The protein belongs to the cytochrome P450 family. The cofactor is heme. Expressed in leaves, rhizomes and stems.

The protein resides in the membrane. The catalysed reaction is (-)-matairesinol + reduced [NADPH--hemoprotein reductase] + O2 = (-)-pluviatolide + oxidized [NADPH--hemoprotein reductase] + 2 H2O + H(+). It functions in the pathway aromatic compound metabolism; phenylpropanoid biosynthesis. Cytochrome P450 involved in the biosynthesis of etoposide, a chemotherapeutic compound of the topoisomerase inhibitor family. Catalyzes the conversion of matairesinol to pluviatolide. The sequence is that of Pluviatolide synthase from Sinopodophyllum hexandrum (Himalayan may apple).